The following is a 428-amino-acid chain: Adenylosuccinate synthetase (428 aa).

GTP-binding positions include 11–17 (GDEGKGK) and 39–41 (GHT). The Proton acceptor role is filled by aspartate 12. Residues aspartate 12 and glycine 39 each contribute to the Mg(2+) site. IMP contacts are provided by residues 12–15 (DEGK), 37–40 (NAGH), threonine 130, arginine 144, asparagine 226, threonine 241, and arginine 305. The active-site Proton donor is the histidine 40. 301–307 (VTTGRKR) provides a ligand contact to substrate. GTP-binding positions include arginine 307, 333–335 (KLD), and 415–417 (GTG).

Belongs to the adenylosuccinate synthetase family. Homodimer. The cofactor is Mg(2+).

The protein localises to the cytoplasm. The enzyme catalyses IMP + L-aspartate + GTP = N(6)-(1,2-dicarboxyethyl)-AMP + GDP + phosphate + 2 H(+). Its pathway is purine metabolism; AMP biosynthesis via de novo pathway; AMP from IMP: step 1/2. Plays an important role in the de novo pathway and in the salvage pathway of purine nucleotide biosynthesis. Catalyzes the first committed step in the biosynthesis of AMP from IMP. The sequence is that of Adenylosuccinate synthetase from Lodderomyces elongisporus (strain ATCC 11503 / CBS 2605 / JCM 1781 / NBRC 1676 / NRRL YB-4239) (Yeast).